Reading from the N-terminus, the 30-residue chain is Dermaseptin-DI4 (30 aa).

As to expression, expressed by the skin glands.

Its subcellular location is the secreted. Its function is as follows. Antibacterial activity against Gram-positive bacteria S.aureus and E.faecalis, and Gram-negative bacteria P.aeruginosa and E.coli. This chain is Dermaseptin-DI4, found in Phyllomedusa distincta (Monkey frog).